A 718-amino-acid polypeptide reads, in one-letter code: Protein Hook homolog 3 (718 aa).

Met-1 carries the post-translational modification N-acetylmethionine. The interval 1-164 (MFNVESVERV…QELMSKESPV (164 aa)) is sufficient for interaction with microtubules. Ser-6 is subject to Phosphoserine. One can recognise a Calponin-homology (CH) domain in the interval 10 to 126 (VELCESLLTW…RMLQLILGCA (117 aa)). Coiled coils occupy residues 168 to 433 (HDAY…VQAQ) and 462 to 663 (EIRE…MEEK). Phosphoserine is present on Ser-238. Residues 450-671 (SSDSLAAEIV…EKYIVSAWYN (222 aa)) are sufficient for interaction with IIGP1. The tract at residues 553-718 (EKLHEANNEL…PGHVQPATAR (166 aa)) is required for association with Golgi. The segment at 682–718 (EDRLASTGSGQSFLARQRQATSTRRSYPGHVQPATAR) is disordered. Polar residues predominate over residues 687–706 (STGSGQSFLARQRQATSTRR). 2 positions are modified to phosphoserine: Ser-693 and Ser-707.

It belongs to the hook family. Self-associates. Component of the FTS/Hook/FHIP complex (FHF complex), composed of AKTIP/FTS, FHIP1B, and one or more members of the Hook family of proteins HOOK1, HOOK2, and HOOK3. May interact directly with AKTIP/FTS, HOOK1 and HOOK2. Associates with several subunits of the homotypic vesicular sorting complex (the HOPS complex) including VPS16 and VPS41; these interactions may be indirect. Interacts with IIGP1. Interacts with MSR1, and this association is stimulated by ligand binding to MSR1. Interacts with microtubules. Part of a tripartite complex with dynein and dynactin, acts an adapter linking the dynein motor complex and dynactin. Interacts with dynein intermediate chain and dynactin (DCTN1). Interacts with CCDC181. Interacts with LRGUK. In terms of assembly, (Microbial infection) Interacts with Salmonella typhimurium spiC. As to expression, expressed in brain, cerebellum, heart, intestine, kidney, liver, lung, skeletal muscle, spleen and stomach (at protein level).

It localises to the cytoplasm. The protein localises to the cytoskeleton. It is found in the golgi apparatus. In terms of biological role, acts as an adapter protein linking the dynein motor complex to various cargos and converts dynein from a non-processive to a highly processive motor in the presence of dynactin. Facilitates the interaction between dynein and dynactin and activates dynein processivity (the ability to move along a microtubule for a long distance without falling off the track). Predominantly recruits 2 dyneins, which increases both the force and speed of the microtubule motor. Component of the FTS/Hook/FHIP complex (FHF complex). The FHF complex may function to promote vesicle trafficking and/or fusion via the homotypic vesicular protein sorting complex (the HOPS complex). May regulate clearance of endocytosed receptors such as MSR1. Participates in defining the architecture and localization of the Golgi complex. FHF complex promotes the distribution of AP-4 complex to the perinuclear area of the cell. Its function is as follows. (Microbial infection) Serves as a target for the spiC protein from Salmonella typhimurium, which inactivates it, leading to a strong alteration in cellular trafficking. This is Protein Hook homolog 3 (Hook3) from Mus musculus (Mouse).